Here is a 218-residue protein sequence, read N- to C-terminus: Molybdenum cofactor guanylyltransferase (218 aa).

Residues 16 to 18 (LAG), lysine 28, asparagine 56, aspartate 74, and aspartate 109 contribute to the GTP site. Aspartate 109 lines the Mg(2+) pocket.

This sequence belongs to the MobA family. As to quaternary structure, monomer. The cofactor is Mg(2+).

Its subcellular location is the cytoplasm. It catalyses the reaction Mo-molybdopterin + GTP + H(+) = Mo-molybdopterin guanine dinucleotide + diphosphate. Transfers a GMP moiety from GTP to Mo-molybdopterin (Mo-MPT) cofactor (Moco or molybdenum cofactor) to form Mo-molybdopterin guanine dinucleotide (Mo-MGD) cofactor. The sequence is that of Molybdenum cofactor guanylyltransferase from Rhizobium meliloti (strain 1021) (Ensifer meliloti).